A 368-amino-acid chain; its full sequence is 1-deoxy-D-xylulose 5-phosphate reductoisomerase (368 aa).

Residues Thr9, Gly10, Ser11, Ile12, Asn35, and Asn106 each contribute to the NADPH site. Lys107 contacts 1-deoxy-D-xylulose 5-phosphate. Glu108 is a binding site for NADPH. Mn(2+) is bound at residue Asp132. Residues Ser133, Glu134, Ser158, and His181 each contribute to the 1-deoxy-D-xylulose 5-phosphate site. Glu134 lines the Mn(2+) pocket. Gly187 is a binding site for NADPH. Residues Ser194, Asn199, Lys200, and Glu203 each coordinate 1-deoxy-D-xylulose 5-phosphate. Glu203 serves as a coordination point for Mn(2+).

Belongs to the DXR family. Mg(2+) serves as cofactor. It depends on Mn(2+) as a cofactor.

It catalyses the reaction 2-C-methyl-D-erythritol 4-phosphate + NADP(+) = 1-deoxy-D-xylulose 5-phosphate + NADPH + H(+). It participates in isoprenoid biosynthesis; isopentenyl diphosphate biosynthesis via DXP pathway; isopentenyl diphosphate from 1-deoxy-D-xylulose 5-phosphate: step 1/6. In terms of biological role, catalyzes the NADPH-dependent rearrangement and reduction of 1-deoxy-D-xylulose-5-phosphate (DXP) to 2-C-methyl-D-erythritol 4-phosphate (MEP). The polypeptide is 1-deoxy-D-xylulose 5-phosphate reductoisomerase (Mycoplasmoides gallisepticum (strain R(low / passage 15 / clone 2)) (Mycoplasma gallisepticum)).